The sequence spans 86 residues: uncharacterized protein (86 aa).

This is an uncharacterized protein from Haemophilus influenzae (strain ATCC 51907 / DSM 11121 / KW20 / Rd).